The following is a 219-amino-acid chain: Flagellin A (219 aa).

The propeptide occupies 1-12; it reads MKVKEFMNNKKG. Residues asparagine 38 and asparagine 175 are each glycosylated (N-linked (GlcNAc...) asparagine).

The protein belongs to the archaeal flagellin family. N-linked glycans consist of the 779 Da trisaccharide beta-ManNAc(Thr)-(1-4)-beta-GlcNAc3NAcA-(1-3)-beta-GlcNAc.

Its subcellular location is the archaeal flagellum. Flagellin is the subunit protein which polymerizes to form the filaments of archaeal flagella. The polypeptide is Flagellin A (flaA) (Methanococcus voltae).